Here is a 346-residue protein sequence, read N- to C-terminus: Uracil-DNA glycosylase (346 aa).

Residues 1 to 105 (MSGKITDFFE…KLKNEEKSEE (105 aa)) form a disordered region. Positions 20–29 (AENKDNDKEL) are enriched in basic and acidic residues. Positions 30–42 (TSTTTTTTTTSTT) are enriched in low complexity. The segment covering 43-64 (SKKKVAAAPKKKAAVASKKRKH) has biased composition (basic residues). Over residues 67–86 (SDEETDKEEQQNDDDDDGEE) the composition is skewed to acidic residues. Residue Asp-186 is the Proton acceptor of the active site.

It belongs to the uracil-DNA glycosylase (UDG) superfamily. UNG family.

The protein resides in the mitochondrion. It is found in the nucleus. The catalysed reaction is Hydrolyzes single-stranded DNA or mismatched double-stranded DNA and polynucleotides, releasing free uracil.. Its function is as follows. Excises uracil residues from the DNA which can arise as a result of misincorporation of dUMP residues by DNA polymerase or due to deamination of cytosine. In Dictyostelium discoideum (Social amoeba), this protein is Uracil-DNA glycosylase (uglA).